The sequence spans 272 residues: Cytosolic Fe-S cluster assembly factor NUBP2 (272 aa).

23 to 30 is a binding site for ATP; it reads GKGGVGKS. Positions 197 and 200 each coordinate [4Fe-4S] cluster.

This sequence belongs to the Mrp/NBP35 ATP-binding proteins family. NUBP2/CFD1 subfamily. Heterotetramer of 2 NUBP1 and 2 NUBP2 chains. [4Fe-4S] cluster serves as cofactor.

Its subcellular location is the cytoplasm. Functionally, component of the cytosolic iron-sulfur (Fe/S) protein assembly (CIA) machinery. Required for maturation of extramitochondrial Fe-S proteins. The NUBP1-NUBP2 heterotetramer forms a Fe-S scaffold complex, mediating the de novo assembly of an Fe-S cluster and its transfer to target apoproteins. This chain is Cytosolic Fe-S cluster assembly factor NUBP2, found in Gallus gallus (Chicken).